Reading from the N-terminus, the 76-residue chain is Lividin-2 (76 aa).

Residues 1 to 22 (MFTLKKSLLLLFFLGTISLSLC) form the signal peptide. Positions 23-41 (QEERNADEEDGGEVTEEEV) are excised as a propeptide. Cysteine 70 and cysteine 76 form a disulfide bridge.

Expressed by the skin glands.

It localises to the secreted. In terms of biological role, antimicrobial peptide. The sequence is that of Lividin-2 from Odorrana livida (Green mountain frog).